Here is a 1826-residue protein sequence, read N- to C-terminus: 1,3-beta-glucan synthase component bgs3 (1826 aa).

A compositionally biased stretch (polar residues) spans 34-43 (QSNDQYNNIQ). Residues 34–90 (QSNDQYNNIQHPAPSFANPFIHEQDDSYSDILEEEPDEDAYDSPERPSSTEEFISQD) form a disordered region. The span at 59–75 (DSYSDILEEEPDEDAYD) shows a compositional bias: acidic residues. 7 consecutive transmembrane segments (helical) span residues 427-447 (IWILHISVFWYFTVYNSPTIY), 465-485 (WCAPALAGAVASFISFLALIL), 504-524 (LIFVSILIALNIVPAAFIFGF), 543-563 (FFFSIGCVAYQSFIPLPFLLG), 597-617 (AALWITVFIAKFVESYYFLTL), 637-657 (FMIGASLCSHQPKFLLSLVYL), and 660-680 (LVLFFLDTYLWYMLISTMFSI). Ser-885 is modified (phosphoserine). A run of 11 helical transmembrane segments spans residues 1272–1292 (VFIMISMQLLMLVFVNLGAMY), 1329–1349 (IISIFIVFFISFLPLVVHDLL), 1375–1397 (VTQNYANSIFTNLTYGGARYIAT), 1417–1437 (GSSIYLGSRLIMMLLFGTMTV), 1438–1458 (WTTHYVYFWVTMFALVICPFI), 1531–1551 (IFTEVFLPACFAFFTICAYTF), 1571–1591 (IWIMAALPIAISTAALLILLM), 1607–1627 (YGAVLAALAHAVSVFGLVFTF), 1642–1662 (VLGCIVIFAIHRLVFKLVVVF), 1701–1721 (CKVVEMNLFAMDFILSHCILF), and 1770–1790 (SLLFFALLCTFVAMIVVPLVL).

It belongs to the glycosyltransferase 48 family. In terms of assembly, component of the 1,3-beta-glucan synthase (GS) complex, composed of at least the alternate catalytic subunits bgs1, bgs2, bgs3, and bgs4, and a regulatory subunit chr4.

Its subcellular location is the membrane. It catalyses the reaction [(1-&gt;3)-beta-D-glucosyl](n) + UDP-alpha-D-glucose = [(1-&gt;3)-beta-D-glucosyl](n+1) + UDP + H(+). In terms of biological role, alternate catalytic subunit of the 1,3-beta-glucan synthase (GS) complex. Synthesizes 1,3-beta-glucan, a major structural component of the yeast cell wall. Required for cell wall biosynthesis and cell elongation. The polypeptide is 1,3-beta-glucan synthase component bgs3 (Schizosaccharomyces pombe (strain 972 / ATCC 24843) (Fission yeast)).